Reading from the N-terminus, the 529-residue chain is Protein PNS1 (529 aa).

A disordered region spans residues 1–58 (MSQQYSYGGGGGAGYPPPQMQPPNSYAQANYQGQPQGAQNQYYNGQQPHHNAPQQYYG). The Cytoplasmic segment spans residues 1–84 (MSQQYSYGGG…LQPKPKFRDP (84 aa)). Residues 22–48 (PPNSYAQANYQGQPQGAQNQYYNGQQP) show a composition bias toward low complexity. A helical transmembrane segment spans residues 85-105 (IFLVLFLLVFAGFIALSVICL). Residues 106–132 (RSYSNADVNVSIGRANVAGSTLNGHTA) are Extracellular-facing. Asparagine 114 carries an N-linked (GlcNAc...) asparagine glycan. A helical transmembrane segment spans residues 133–153 (IMFMICCAVALVLSFVYILLV). At 154–158 (RTFPK) the chain is on the cytoplasmic side. A helical transmembrane segment spans residues 159 to 179 (IILEATLLLTTLSNVAFCVYL). At 180–184 (WVRGN) the chain is on the extracellular side. A helical membrane pass occupies residues 185–205 (TAAAIIFTIFAVLSVIAYFFM). The Cytoplasmic portion of the chain corresponds to 206–230 (RKRIPLAKLILVTVIRTAEQYKSVY). Residues 231-251 (VVALGGLIVETAFSAWTSWVV) form a helical membrane-spanning segment. Over 252–271 (VAAYQRFEPSGQAAGSSSSN) the chain is Extracellular. Asparagine 271 carries an N-linked (GlcNAc...) asparagine glycan. Residues 272 to 292 (ASIIGIMVFIVFAYYWISEVI) form a helical membrane-spanning segment. The Cytoplasmic portion of the chain corresponds to 293–294 (KN). A helical transmembrane segment spans residues 295–315 (IAFTTVAGIFGVAYYNANKVA). The Extracellular segment spans residues 316–325 (NAAWGAFRRS). A helical membrane pass occupies residues 326 to 346 (MTYSLGSICFGSLIVAILDLL). The Cytoplasmic portion of the chain corresponds to 347 to 362 (RALFNILQSQAASDGD). A helical transmembrane segment spans residues 363-383 (MTGQILACVAGCCVSCIQGLV). At 384–427 (DYFNRYAYINIALYGNGYITAAKETWALLKDRGIDAIINDSLVN) the chain is on the extracellular side. Asparagine 422 carries an N-linked (GlcNAc...) asparagine glycan. Residues 428-448 (IVFNCGAFIIGLLTALFAFIY) form a helical membrane-spanning segment. At 449-464 (EQLTNPRYLQNDAGYY) the chain is on the cytoplasmic side. A helical membrane pass occupies residues 465-485 (SIVLLVAFGLGFNIALSVGAG). Residues 486–529 (SIASGVSTYFVALAEDPYILQGKNPELFEMIRQQYPQVVQGVNH) are Extracellular-facing.

It belongs to the CTL (choline transporter-like) family.

Its subcellular location is the cell membrane. Probably involved in transport through the plasma membrane. This is Protein PNS1 (PNS1) from Mycosarcoma maydis (Corn smut fungus).